A 277-amino-acid polypeptide reads, in one-letter code: uncharacterized protein (277 aa).

The segment at 232–262 (NNESAICESQASSKEDERSDKTTSSSKKKSF) is disordered. The span at 234–243 (ESAICESQAS) shows a compositional bias: polar residues.

The protein resides in the cytoplasm. The protein localises to the nucleus. This is an uncharacterized protein from Schizosaccharomyces pombe (strain 972 / ATCC 24843) (Fission yeast).